The following is a 163-amino-acid chain: Large ribosomal subunit protein uL10 (163 aa).

It belongs to the universal ribosomal protein uL10 family. Part of the ribosomal stalk of the 50S ribosomal subunit. The N-terminus interacts with L11 and the large rRNA to form the base of the stalk. The C-terminus forms an elongated spine to which L12 dimers bind in a sequential fashion forming a multimeric L10(L12)X complex.

Functionally, forms part of the ribosomal stalk, playing a central role in the interaction of the ribosome with GTP-bound translation factors. This chain is Large ribosomal subunit protein uL10, found in Mannheimia succiniciproducens (strain KCTC 0769BP / MBEL55E).